A 144-amino-acid polypeptide reads, in one-letter code: Putative pre-16S rRNA nuclease (144 aa).

This sequence belongs to the YqgF nuclease family.

It localises to the cytoplasm. Functionally, could be a nuclease involved in processing of the 5'-end of pre-16S rRNA. This chain is Putative pre-16S rRNA nuclease, found in Wigglesworthia glossinidia brevipalpis.